The chain runs to 164 residues: Phosphopantetheine adenylyltransferase (164 aa).

Residue S10 coordinates substrate. ATP is bound by residues 10 to 11 (SF) and H18. Substrate is bound by residues K42, T79, and R93. ATP is bound by residues 94 to 96 (GLR), E104, and 129 to 135 (VRPIAAT).

This sequence belongs to the bacterial CoaD family. In terms of assembly, homohexamer. Mg(2+) is required as a cofactor.

The protein localises to the cytoplasm. It carries out the reaction (R)-4'-phosphopantetheine + ATP + H(+) = 3'-dephospho-CoA + diphosphate. It functions in the pathway cofactor biosynthesis; coenzyme A biosynthesis; CoA from (R)-pantothenate: step 4/5. Functionally, reversibly transfers an adenylyl group from ATP to 4'-phosphopantetheine, yielding dephospho-CoA (dPCoA) and pyrophosphate. This is Phosphopantetheine adenylyltransferase from Bradyrhizobium sp. (strain BTAi1 / ATCC BAA-1182).